Consider the following 387-residue polypeptide: MKWLLLLGLLALSECIVHKVPLVRKKSLRKNLIEKGLLQDYLKTHTPNPATKYFPKETFATVSTESMENYLDAEYFGTISIGTPPQDFTVIFDTGSSNLWVPSTYCSSLACALHKRFNPEDSSTYQGTSETLSITYGTGSMTGILGYDTVKVGSIEDTNQIFGLSKTEPSLTFLFAPFDGILGLAYPSISSSDATPVFDNMWNEGLVSQDLFSVYLSSDDEKGSLVMFGGIDSSYYTGSLNWVPVSYEGYWQITMDSVSINGETIACADSCQAIVDTGTSLLTGPTSAISNIQSYIGASKNLLGENVISCSAIDSLPDIVFTINGIQYPLPASAYILKEDDDCTSGLEGMNVDTYTGELWILGDVFIRQYFTVFDRANNQLGLAAAV.

The first 15 residues, 1 to 15 (MKWLLLLGLLALSEC), serve as a signal peptide directing secretion. The propeptide at 16-59 (IVHKVPLVRKKSLRKNLIEKGLLQDYLKTHTPNPATKYFPKETF) is activation peptide. The 310-residue stretch at 75–384 (YFGTISIGTP…DRANNQLGLA (310 aa)) folds into the Peptidase A1 domain. The active site involves Asp93. Cys106 and Cys111 are joined by a disulfide. Position 129 is a phosphoserine (Ser129). The cysteines at positions 267 and 271 are disulfide-linked. Residue Asp276 is part of the active site. Cys310 and Cys343 are joined by a disulfide.

The protein belongs to the peptidase A1 family.

It is found in the secreted. It catalyses the reaction Preferential cleavage: hydrophobic, preferably aromatic, residues in P1 and P1' positions. Cleaves 1-Phe-|-Val-2, 4-Gln-|-His-5, 13-Glu-|-Ala-14, 14-Ala-|-Leu-15, 15-Leu-|-Tyr-16, 16-Tyr-|-Leu-17, 23-Gly-|-Phe-24, 24-Phe-|-Phe-25 and 25-Phe-|-Tyr-26 bonds in the B chain of insulin.. Shows particularly broad specificity; although bonds involving phenylalanine and leucine are preferred, many others are also cleaved to some extent. The polypeptide is Pepsin II-2/3 (Oryctolagus cuniculus (Rabbit)).